The primary structure comprises 250 residues: 5-oxoprolinase subunit A (250 aa).

The protein belongs to the LamB/PxpA family. In terms of assembly, forms a complex composed of PxpA, PxpB and PxpC.

It carries out the reaction 5-oxo-L-proline + ATP + 2 H2O = L-glutamate + ADP + phosphate + H(+). In terms of biological role, catalyzes the cleavage of 5-oxoproline to form L-glutamate coupled to the hydrolysis of ATP to ADP and inorganic phosphate. In Paraburkholderia xenovorans (strain LB400), this protein is 5-oxoprolinase subunit A.